Consider the following 631-residue polypeptide: Vacuolar-sorting receptor 6 (631 aa).

The first 25 residues, 1-25 (MSLIHKGATLALFLALTMVVNGVFG), serve as a signal peptide directing secretion. Topologically, residues 26 to 563 (RFIVEKSSVT…CIERSGSRIG (538 aa)) are lumenal. Positions 57–165 (NYGGYMIGSV…SFANTLKQAL (109 aa)) constitute a PA domain. N-linked (GlcNAc...) asparagine glycans are attached at residues asparagine 294 and asparagine 431. EGF-like domains follow at residues 413–463 (ETNE…TSCE) and 494–540 (ETSG…FECK). Cystine bridges form between cysteine 417/cysteine 435, cysteine 424/cysteine 444, cysteine 446/cysteine 462, cysteine 498/cysteine 511, and cysteine 530/cysteine 539. The chain crosses the membrane as a helical span at residues 564 to 584 (WFPTFVILAAVASICVGGYVF). The Cytoplasmic segment spans residues 585–631 (YKYRLRSYMDSEIMAIMSQYMPLESQNTTDPMTGESQHQQLRLTSAA). The Tyrosine-based internalization motif signature appears at 604-607 (YMPL). Positions 610–631 (QNTTDPMTGESQHQQLRLTSAA) are disordered.

It belongs to the VSR (BP-80) family. Expressed in seedlings, roots, leaves, flowers and siliques.

It is found in the membrane. It localises to the golgi apparatus membrane. The protein resides in the cytoplasmic vesicle. Its subcellular location is the clathrin-coated vesicle membrane. The protein localises to the prevacuolar compartment membrane. In terms of biological role, vacuolar-sorting receptor (VSR) involved in clathrin-coated vesicles sorting from Golgi apparatus to vacuoles. The sequence is that of Vacuolar-sorting receptor 6 (VSR6) from Arabidopsis thaliana (Mouse-ear cress).